A 989-amino-acid chain; its full sequence is DNA-directed RNA polymerase subunit beta' (989 aa).

Residues D383, D385, and D387 each coordinate Mg(2+).

The protein belongs to the RNA polymerase beta' chain family. In terms of assembly, the RNAP catalytic core consists of 2 alpha, 1 beta, 1 beta' and 1 omega subunit. When a sigma factor is associated with the core the holoenzyme is formed, which can initiate transcription. It depends on Mg(2+) as a cofactor.

The catalysed reaction is RNA(n) + a ribonucleoside 5'-triphosphate = RNA(n+1) + diphosphate. Its function is as follows. DNA-dependent RNA polymerase catalyzes the transcription of DNA into RNA using the four ribonucleoside triphosphates as substrates. The chain is DNA-directed RNA polymerase subunit beta' (rpoC) from Leuconostoc pseudomesenteroides.